The following is a 133-amino-acid chain: Protein Ac75 (133 aa).

As to quaternary structure, interacts with protein Ac76.

It localises to the virion. It is found in the host cytoplasm. Its subcellular location is the host nucleus. Plays a role in nuclear egress of nucleocapsids and intranuclear microvesicle formation. This chain is Protein Ac75 (Ac75), found in Lepidoptera (butterflies and moths).